The sequence spans 410 residues: Translation initiation factor 2 subunit gamma (410 aa).

A tr-type G domain is found at 9 to 202 (QAEVNIGMVG…AIEEFIPTPK (194 aa)). Positions 18-25 (GHVDHGKT) are G1. Positions 21, 25, 46, and 48 each coordinate Mg(2+). 21–26 (DHGKTT) provides a ligand contact to GTP. Residues 46–50 (GITIK) form a G2 region. C61, C64, C73, and C76 together coordinate Zn(2+). The segment at 90–93 (DAPG) is G3. GTP is bound by residues 145–148 (NKIE) and 180–182 (SAL). The interval 145-148 (NKIE) is G4. Positions 180–182 (SAL) are G5.

Belongs to the TRAFAC class translation factor GTPase superfamily. Classic translation factor GTPase family. EIF2G subfamily. As to quaternary structure, heterotrimer composed of an alpha, a beta and a gamma chain. It depends on Mg(2+) as a cofactor.

It catalyses the reaction GTP + H2O = GDP + phosphate + H(+). In terms of biological role, eIF-2 functions in the early steps of protein synthesis by forming a ternary complex with GTP and initiator tRNA. The protein is Translation initiation factor 2 subunit gamma of Thermococcus kodakarensis (strain ATCC BAA-918 / JCM 12380 / KOD1) (Pyrococcus kodakaraensis (strain KOD1)).